Here is a 573-residue protein sequence, read N- to C-terminus: Ascochitine biosynthesis cluster transcriptional regulator (573 aa).

Its subcellular location is the nucleus. Its function is as follows. Transcription factor that regulates the expression of the gene cluster that mediates the biosynthesis of the mycotoxin ascochitine, an o-quinone methide that plays a possible protective role against other microbial competitors in nature and is considered to be important for pathogenicity of legume-associated Didymella species. The chain is Ascochitine biosynthesis cluster transcriptional regulator from Didymella fabae (Leaf and pod spot disease fungus).